The following is a 678-amino-acid chain: DNA ligase (678 aa).

NAD(+) contacts are provided by residues 47 to 51 (DSDYD), 96 to 97 (SL), and Glu122. Lys124 acts as the N6-AMP-lysine intermediate in catalysis. Arg145, Glu182, Lys300, and Lys324 together coordinate NAD(+). Cys418, Cys421, Cys436, and Cys442 together coordinate Zn(2+). In terms of domain architecture, BRCT spans 602–678 (AYNESFTGKT…ILEDNLKDLL (77 aa)).

It belongs to the NAD-dependent DNA ligase family. LigA subfamily. Mg(2+) serves as cofactor. Requires Mn(2+) as cofactor.

The catalysed reaction is NAD(+) + (deoxyribonucleotide)n-3'-hydroxyl + 5'-phospho-(deoxyribonucleotide)m = (deoxyribonucleotide)n+m + AMP + beta-nicotinamide D-nucleotide.. Functionally, DNA ligase that catalyzes the formation of phosphodiester linkages between 5'-phosphoryl and 3'-hydroxyl groups in double-stranded DNA using NAD as a coenzyme and as the energy source for the reaction. It is essential for DNA replication and repair of damaged DNA. The chain is DNA ligase from Francisella tularensis subsp. tularensis (strain SCHU S4 / Schu 4).